The sequence spans 248 residues: UPF0246 protein lp_0089 (248 aa).

This sequence belongs to the UPF0246 family.

In Lactiplantibacillus plantarum (strain ATCC BAA-793 / NCIMB 8826 / WCFS1) (Lactobacillus plantarum), this protein is UPF0246 protein lp_0089.